Reading from the N-terminus, the 249-residue chain is Hydantoin racemase (249 aa).

This sequence belongs to the HyuE racemase family. In terms of assembly, homohexamer.

The catalysed reaction is a D-5-monosubstituted hydantoin = a L-5-monosubstituted hydantoin. The enzyme catalyses D-5-[2-(methylsulfanyl)ethyl]hydantoin = L-5-[2-(methysulfanyl)ethyl]hydantoin. It carries out the reaction D-5-benzylhydantoin = L-5-benzylhydantoin. It catalyses the reaction D-5-isopropylhydantoin = L-5-isopropylhydantoin. The catalysed reaction is D-5-isobutylhydantoin = L-5-isobutylhydantoin. Its activity is regulated as follows. Strongly inhibited by Cu(2+) and Zn(2+). Slightly stimulated by the addition of Mn(2+) or Co(2+), but also by metal-chelating agents such as EDTA or EGTA, indicating that the enzyme is not a metalloenzyme. Functionally, involved in the asymmetric conversion of racemic 5-substituted hydantoins to the corresponding L-amino acids. Catalyzes the racemization via enolization of D- and L-5-monosubstituted hydantoins. Is able to racemize 5-substituted hydantoins having aromatic or aliphatic substituents such as 5-(2-methylthioethyl)hydantoin, 5-isopropylhydantoin, 5-isobutylhydantoin and 5-benzylhydantoin. The polypeptide is Hydantoin racemase (Pseudomonas sp. (strain NS671)).